The primary structure comprises 115 residues: Cycloviolacin-O13 (115 aa).

Residues 1–22 (MDAKKMFVALVLIATFALPSLA) form the signal peptide. A propeptide spanning residues 23–81 (TFEKDFITPETIQAILKKSAPLSNIMLEEDVINALLKSKTVISNPIIEEAFLKNSNGLN) is cleaved from the precursor. A cross-link (cyclopeptide (Gly-Asn)) is located at residues 82–111 (GIPCGESCVWIPCISAAIGCSCKSKVCYRN). 3 disulfides stabilise this stretch: C85–C101, C89–C103, and C94–C108. Residues 112–115 (SLDN) constitute a propeptide that is removed on maturation.

Cycloviolacin-O13 is a cyclic peptide. In terms of tissue distribution, expressed in leaves, petals, petioles, roots and runners (at protein level).

Functionally, probably participates in a plant defense mechanism. Has hemolytic activity. This is Cycloviolacin-O13 from Viola odorata (Sweet violet).